We begin with the raw amino-acid sequence, 300 residues long: UDP-3-O-acyl-N-acetylglucosamine deacetylase (300 aa).

Residues histidine 78, histidine 237, and aspartate 241 each coordinate Zn(2+). Histidine 264 serves as the catalytic Proton donor.

Belongs to the LpxC family. The cofactor is Zn(2+).

The enzyme catalyses a UDP-3-O-[(3R)-3-hydroxyacyl]-N-acetyl-alpha-D-glucosamine + H2O = a UDP-3-O-[(3R)-3-hydroxyacyl]-alpha-D-glucosamine + acetate. It functions in the pathway glycolipid biosynthesis; lipid IV(A) biosynthesis; lipid IV(A) from (3R)-3-hydroxytetradecanoyl-[acyl-carrier-protein] and UDP-N-acetyl-alpha-D-glucosamine: step 2/6. Its function is as follows. Catalyzes the hydrolysis of UDP-3-O-myristoyl-N-acetylglucosamine to form UDP-3-O-myristoylglucosamine and acetate, the committed step in lipid A biosynthesis. The protein is UDP-3-O-acyl-N-acetylglucosamine deacetylase of Acinetobacter baumannii (strain AB307-0294).